Here is a 367-residue protein sequence, read N- to C-terminus: D-alanine--D-alanine ligase (367 aa).

The region spanning 145-351 (KRLLRDAGLP…QPALMDALIA (207 aa)) is the ATP-grasp domain. Residue 174–229 (HAVGCSELFIKPANLGSSVGISKARTPQEFAAACDLALRFDGKILIERCISPVREI) coordinates ATP. D306, E318, and N320 together coordinate Mg(2+).

The protein belongs to the D-alanine--D-alanine ligase family. Mg(2+) is required as a cofactor. Requires Mn(2+) as cofactor.

The protein resides in the cytoplasm. It catalyses the reaction 2 D-alanine + ATP = D-alanyl-D-alanine + ADP + phosphate + H(+). The protein operates within cell wall biogenesis; peptidoglycan biosynthesis. Functionally, cell wall formation. This is D-alanine--D-alanine ligase from Bradyrhizobium sp. (strain BTAi1 / ATCC BAA-1182).